Reading from the N-terminus, the 168-residue chain is Replicase polyprotein 1ab (168 aa).

The Nidovirus-type SAM-dependent 2'-O-MTase domain occupies 1 to 165; sequence PNTKSIDGEN…KLLNFGNHLV (165 aa).

The replicase polyprotein of coronaviruses is a multifunctional protein: it contains the activities necessary for the transcription of negative stranded RNA, leader RNA, subgenomic mRNAs and progeny virion RNA as well as proteinases responsible for the cleavage of the polyprotein into functional products. This Canine coronavirus (strain Insavc-1) (CCoV) protein is Replicase polyprotein 1ab (rep).